Reading from the N-terminus, the 251-residue chain is Octanoyltransferase (251 aa).

Residues 56-241 enclose the BPL/LPL catalytic domain; sequence AETPDEIWIV…NLDGASAAAD (186 aa). Residues 96–103, 168–170, and 181–183 each bind substrate; these read RGGQITYH, ALG, and GLS. Cysteine 199 serves as the catalytic Acyl-thioester intermediate.

The protein belongs to the LipB family.

The protein localises to the cytoplasm. It carries out the reaction octanoyl-[ACP] + L-lysyl-[protein] = N(6)-octanoyl-L-lysyl-[protein] + holo-[ACP] + H(+). The protein operates within protein modification; protein lipoylation via endogenous pathway; protein N(6)-(lipoyl)lysine from octanoyl-[acyl-carrier-protein]: step 1/2. In terms of biological role, catalyzes the transfer of endogenously produced octanoic acid from octanoyl-acyl-carrier-protein onto the lipoyl domains of lipoate-dependent enzymes. Lipoyl-ACP can also act as a substrate although octanoyl-ACP is likely to be the physiological substrate. The sequence is that of Octanoyltransferase from Burkholderia vietnamiensis (strain G4 / LMG 22486) (Burkholderia cepacia (strain R1808)).